A 730-amino-acid polypeptide reads, in one-letter code: Catalase-peroxidase (730 aa).

Residues 95 to 218 (WHSAGTYRVG…LAAVQMGLIY (124 aa)) constitute a cross-link (tryptophyl-tyrosyl-methioninium (Trp-Tyr) (with M-244)). The active-site Proton acceptor is the histidine 96. A cross-link (tryptophyl-tyrosyl-methioninium (Tyr-Met) (with W-95)) is located at residues 218-244 (YVNPEGPNGNPDPLGSAHDVRETFARM). Heme b is bound at residue histidine 259.

Belongs to the peroxidase family. Peroxidase/catalase subfamily. As to quaternary structure, homodimer or homotetramer. Heme b serves as cofactor. Post-translationally, formation of the three residue Trp-Tyr-Met cross-link is important for the catalase, but not the peroxidase activity of the enzyme.

The enzyme catalyses H2O2 + AH2 = A + 2 H2O. The catalysed reaction is 2 H2O2 = O2 + 2 H2O. In terms of biological role, bifunctional enzyme with both catalase and broad-spectrum peroxidase activity. In Clostridium botulinum (strain Eklund 17B / Type B), this protein is Catalase-peroxidase.